Here is a 159-residue protein sequence, read N- to C-terminus: Phosphopantetheine adenylyltransferase (159 aa).

T10 serves as a coordination point for substrate. Residues 10-11 and H18 each bind ATP; that span reads TF. Residues K42, L73, and R87 each coordinate substrate. Residues 88 to 90, E98, and 123 to 129 each bind ATP; these read GLR and YSYVSGT.

The protein belongs to the bacterial CoaD family. Homohexamer. Mg(2+) serves as cofactor.

The protein localises to the cytoplasm. It carries out the reaction (R)-4'-phosphopantetheine + ATP + H(+) = 3'-dephospho-CoA + diphosphate. The protein operates within cofactor biosynthesis; coenzyme A biosynthesis; CoA from (R)-pantothenate: step 4/5. Reversibly transfers an adenylyl group from ATP to 4'-phosphopantetheine, yielding dephospho-CoA (dPCoA) and pyrophosphate. The polypeptide is Phosphopantetheine adenylyltransferase (Coxiella burnetii (strain CbuK_Q154) (Coxiella burnetii (strain Q154))).